The chain runs to 138 residues: ATP synthase epsilon chain (138 aa).

Belongs to the ATPase epsilon chain family. As to quaternary structure, F-type ATPases have 2 components, CF(1) - the catalytic core - and CF(0) - the membrane proton channel. CF(1) has five subunits: alpha(3), beta(3), gamma(1), delta(1), epsilon(1). CF(0) has three main subunits: a, b and c.

The protein localises to the cell membrane. In terms of biological role, produces ATP from ADP in the presence of a proton gradient across the membrane. The protein is ATP synthase epsilon chain of Streptococcus gordonii (strain Challis / ATCC 35105 / BCRC 15272 / CH1 / DL1 / V288).